We begin with the raw amino-acid sequence, 70 residues long: Alpha-conotoxin EIIB (70 aa).

The N-terminal stretch at 1 to 21 (MGMRMMFIVFLLVVLATTVVS) is a signal peptide. A propeptide spanning residues 22–51 (FTLDHVLGLASEGRNAKAIDNALDQRDPKR) is cleaved from the precursor. At glutamine 52 the chain carries Pyrrolidone carboxylic acid. Proline 54 carries the hydroxyproline modification. 2 disulfide bridges follow: cysteine 56–cysteine 62 and cysteine 57–cysteine 67. Residue cysteine 67 is modified to Cysteine amide.

As to expression, expressed by the venom duct.

The protein resides in the secreted. Alpha-conotoxins bind to the nicotinic acetylcholine receptors (nAChR) and inhibit them. This peptide potently blocks muscular nicotinic acetylcholine receptor (CHRNA1-CHRNB1-CHRNG-CHRND), and has no effect on neuronal receptors. It is able to totally displace [125I]-Bgtx from the Torpedo receptor with an inhibition constant (Ki) of 2.2 and 0.7 nM. This is Alpha-conotoxin EIIB from Conus ermineus (Agate cone).